Reading from the N-terminus, the 150-residue chain is Cilia- and flagella-associated protein 68 (150 aa).

2 mn regions span residues 99-110 (TTYDTSYNNKMP) and 140-150 (KSTYMNSYSKP).

The protein belongs to the CFAP68 family. Microtubule inner protein component of sperm flagellar doublet microtubules.

Its subcellular location is the cytoplasm. It localises to the cytoskeleton. The protein localises to the cilium axoneme. The protein resides in the flagellum axoneme. It is found in the nucleus. Its subcellular location is the cell projection. It localises to the cilium. In terms of biological role, microtubule inner protein (MIP) part of the dynein-decorated doublet microtubules (DMTs) in cilia axoneme, which is required for motile cilia beating. This is Cilia- and flagella-associated protein 68 from Homo sapiens (Human).